Reading from the N-terminus, the 421-residue chain is Synaptotagmin-1 (421 aa).

The interval 1-40 (MVSESHHEALAAPPATTVAAAPPSNVTEPASPGGGGGKED) is disordered. Residues 1 to 60 (MVSESHHEALAAPPATTVAAAPPSNVTEPASPGGGGGKEDAFSKLKEKFMNELNKIPLPP) lie on the Vesicular side of the membrane. The span at 10 to 23 (LAAPPATTVAAAPP) shows a compositional bias: low complexity. Asparagine 25 is a glycosylation site (N-linked (GlcNAc...) asparagine). The chain crosses the membrane as a helical span at residues 61–81 (WALIAIAIVAVLLILTCCFCL). S-palmitoyl cysteine attachment occurs at residues cysteine 77, cysteine 78, cysteine 80, cysteine 82, and cysteine 85. Topologically, residues 82-421 (CKKCLFKKKN…EVDAMLAVKK (340 aa)) are cytoplasmic. The interval 94-139 (KGKEKGGKNAINMKDVKDLGKTMKDQDDDAETGLTDGEEKEEPKEV) is disordered. Basic and acidic residues predominate over residues 107-118 (KDVKDLGKTMKD). Residues 119-133 (QDDDAETGLTDGEEK) are compositionally biased toward acidic residues. Residues 135 to 381 (EPKEVEKLGK…AIGKVFVGYN (247 aa)) are phospholipid binding. C2 domains lie at 141-260 (KLGK…EEWR) and 272-405 (KLGD…AQWH). Ca(2+)-binding residues include leucine 171, aspartate 172, aspartate 178, aspartate 230, phenylalanine 231, aspartate 232, serine 235, lysine 236, aspartate 238, aspartate 303, aspartate 309, aspartate 363, aspartate 365, and aspartate 371.

It belongs to the synaptotagmin family. As to quaternary structure, homotetramer. It depends on Ca(2+) as a cofactor.

It is found in the cytoplasmic vesicle. The protein localises to the secretory vesicle membrane. Its subcellular location is the secretory vesicle. The protein resides in the synaptic vesicle membrane. It localises to the chromaffin granule membrane. It is found in the cytoplasm. In terms of biological role, calcium sensor that participates in triggering neurotransmitter release at the synapse. May have a regulatory role in the membrane interactions during trafficking of synaptic vesicles at the active zone of the synapse. It binds acidic phospholipids with a specificity that requires the presence of both an acidic head group and a diacyl backbone. May play a role in dendrite formation by melanocytes. May play a role in regulating the secretion of hormones relevant to the reproduction and egg-laying of female geese. The sequence is that of Synaptotagmin-1 from Anser cygnoides (Swan goose).